The chain runs to 154 residues: Aspartate carbamoyltransferase regulatory chain (154 aa).

The Zn(2+) site is built by cysteine 109, cysteine 114, cysteine 138, and cysteine 141.

This sequence belongs to the PyrI family. As to quaternary structure, contains catalytic and regulatory chains. Zn(2+) serves as cofactor.

In terms of biological role, involved in allosteric regulation of aspartate carbamoyltransferase. This is Aspartate carbamoyltransferase regulatory chain from Serratia proteamaculans (strain 568).